Reading from the N-terminus, the 130-residue chain is S-protein homolog 32 (130 aa).

Residues 1–21 form the signal peptide; it reads MKYFTIFVFVFSLCMLGHVSG.

This sequence belongs to the plant self-incompatibility (S1) protein family.

It localises to the secreted. The polypeptide is S-protein homolog 32 (Arabidopsis thaliana (Mouse-ear cress)).